We begin with the raw amino-acid sequence, 477 residues long: Glutamate--tRNA ligase 2 (477 aa).

The 'HIGH' region motif lies at 9 to 19; the sequence is PSPTGFLHIGG. The short motif at 238-242 is the 'KMSKS' region element; sequence KLSKR. K241 lines the ATP pocket.

It belongs to the class-I aminoacyl-tRNA synthetase family. Glutamate--tRNA ligase type 1 subfamily. As to quaternary structure, monomer.

The protein resides in the cytoplasm. The enzyme catalyses tRNA(Glu) + L-glutamate + ATP = L-glutamyl-tRNA(Glu) + AMP + diphosphate. Functionally, catalyzes the attachment of glutamate to tRNA(Glu) in a two-step reaction: glutamate is first activated by ATP to form Glu-AMP and then transferred to the acceptor end of tRNA(Glu). This is Glutamate--tRNA ligase 2 from Paramagnetospirillum magneticum (strain ATCC 700264 / AMB-1) (Magnetospirillum magneticum).